The chain runs to 414 residues: Putative competence-damage inducible protein (414 aa).

The protein belongs to the CinA family.

This Listeria monocytogenes serotype 4a (strain HCC23) protein is Putative competence-damage inducible protein.